Here is a 181-residue protein sequence, read N- to C-terminus: Large ribosomal subunit protein uL6 (181 aa).

It belongs to the universal ribosomal protein uL6 family. Part of the 50S ribosomal subunit.

This protein binds to the 23S rRNA, and is important in its secondary structure. It is located near the subunit interface in the base of the L7/L12 stalk, and near the tRNA binding site of the peptidyltransferase center. The sequence is that of Large ribosomal subunit protein uL6 from Phytoplasma mali (strain AT).